Consider the following 344-residue polypeptide: DnaJ homolog subfamily C member 25 (344 aa).

The helical transmembrane segment at 5–25 threads the bilayer; that stretch reads WVLLVALSVLFLSGRAGALTE. Positions 33–108 constitute a J domain; sequence VCYDVLGVSR…ETRKDYDYML (76 aa). The next 2 membrane-spanning stretches (helical) occupy residues 134–154 and 228–248; these read IVIL…WWSS and ILLF…SWYV.

The protein belongs to the DNAJC25 family.

The protein localises to the membrane. This Xenopus laevis (African clawed frog) protein is DnaJ homolog subfamily C member 25 (dnajc25).